We begin with the raw amino-acid sequence, 146 residues long: Large ribosomal subunit protein uL15 (146 aa).

Residues Met-1–Pro-10 are compositionally biased toward basic and acidic residues. Residues Met-1–Ala-41 are disordered.

This sequence belongs to the universal ribosomal protein uL15 family. In terms of assembly, part of the 50S ribosomal subunit.

Its function is as follows. Binds to the 23S rRNA. This is Large ribosomal subunit protein uL15 from Mycobacterium tuberculosis (strain ATCC 25177 / H37Ra).